Consider the following 356-residue polypeptide: tRNA N6-adenosine threonylcarbamoyltransferase (356 aa).

Fe cation contacts are provided by His-115 and His-119. Residues 138–142, Asp-171, Gly-184, and Asn-283 contribute to the substrate site; that span reads LVSGG. Asp-311 contacts Fe cation.

It belongs to the KAE1 / TsaD family. Requires Fe(2+) as cofactor.

The protein localises to the cytoplasm. The catalysed reaction is L-threonylcarbamoyladenylate + adenosine(37) in tRNA = N(6)-L-threonylcarbamoyladenosine(37) in tRNA + AMP + H(+). Its function is as follows. Required for the formation of a threonylcarbamoyl group on adenosine at position 37 (t(6)A37) in tRNAs that read codons beginning with adenine. Is involved in the transfer of the threonylcarbamoyl moiety of threonylcarbamoyl-AMP (TC-AMP) to the N6 group of A37, together with TsaE and TsaB. TsaD likely plays a direct catalytic role in this reaction. This is tRNA N6-adenosine threonylcarbamoyltransferase from Prochlorococcus marinus (strain MIT 9313).